Consider the following 394-residue polypeptide: Potassium channel subfamily K member 3 (394 aa).

The Cytoplasmic portion of the chain corresponds to 1–8 (MKRQNVRT). The helical transmembrane segment at 9–29 (LALIVCTFTYLLVGAAVFDAL) threads the bilayer. Residue asparagine 53 is glycosylated (N-linked (GlcNAc...) asparagine). An intramembrane region (pore-forming) is located at residues 78-101 (WRFAGSFYFAITVITTIGYGHAAP). Residues threonine 93, isoleucine 94, glycine 95, and tyrosine 96 each coordinate K(+). The segment at 93-98 (TIGYGH) is selectivity filter 1. The chain crosses the membrane as a helical span at residues 108 to 128 (VFCMFYALLGIPLTLVMFQSL). Residues 129–158 (GERINTLVRYLLHRAKKGLGMRRADVSMAN) lie on the Cytoplasmic side of the membrane. A helical transmembrane segment spans residues 159–179 (MVLIGFFSCISTLCIGAAAFS). Residues 184–207 (WTFFQAYYYCFITLTTIGFGDYVA) constitute an intramembrane region (pore-forming). Threonine 199, isoleucine 200, glycine 201, and phenylalanine 202 together coordinate K(+). Residues 199–204 (TIGFGD) form a selectivity filter 2 region. The helical transmembrane segment at 223–243 (FSFVYILTGLTVIGAFLNLVV) threads the bilayer. Residues 243–248 (VLRFMT) are X-gate. Topologically, residues 244 to 394 (LRFMTMNAED…RGLMKRRSSV (151 aa)) are cytoplasmic. 2 disordered regions span residues 266–286 (RNGQ…DTAS) and 338–357 (TCVE…SDTP). The segment covering 269–278 (QAGGGGGGGS) has biased composition (gly residues).

It belongs to the two pore domain potassium channel (TC 1.A.1.8) family. As to quaternary structure, homodimer. Heterodimer with KCNK1. Heterodimer with KCNK9. As to expression, widespread expression in adult. Strongest expression in pancreas and placenta. Lower expression in brain, lung, prostate, heart, kidney, uterus, small intestine and colon.

It localises to the cell membrane. The enzyme catalyses K(+)(in) = K(+)(out). It catalyses the reaction Na(+)(in) = Na(+)(out). Inhibited by external acidification, diacylglycerol and anandamide. Activated by halothane and isoflurane. Functionally, k(+) channel that conducts voltage-dependent outward rectifying currents upon membrane depolarization. Voltage sensing is coupled to K(+) electrochemical gradient in an 'ion flux gating' mode where outward but not inward ion flow opens the gate. Changes ion selectivity and becomes permeable to Na(+) ions in response to extracellular acidification. Protonation of the pH sensor His-98 stabilizes C-type inactivation conformation likely converting the channel from outward K(+)-conducting, to inward Na(+)-conducting to nonconductive state. Homo- and heterodimerizes to form functional channels with distinct regulatory and gating properties. Allows K(+) currents with fast-gating kinetics important for the repolarization and hyperpolarization phases of action potentials. In cerebellar granule cells, heteromeric KCNK3:KCNK9 channel may hyperpolarize the resting membrane potential to limit intrinsic neuronal excitability, but once the action potential threshold is reached, it may support high-frequency action potential firing and increased neuronal excitability. Dispensable for central chemosensory respiration i.e. breathing controlled by brainstem CO2/pH, it rather conducts pH-sensitive currents and controls the firing rate of serotonergic raphe neurons involved in potentiation of the respiratory chemoreflex. Additionally, imparts chemosensitivity to type 1 cells in carotid bodies which respond to a decrease in arterial oxygen pressure or an increase in carbon dioxide pressure or pH to initiate adaptive changes in pulmonary ventilation. In adrenal gland, contributes to the maintenance of a hyperpolarized resting membrane potential of aldosterone-producing cells at zona glomerulosa and limits aldosterone release as part of a regulatory mechanism that controls arterial blood pressure and electrolyte homeostasis. In brown adipocytes, mediates K(+) efflux that counteracts norepinephrine-induced membrane depolarization, limits Ca(2+) efflux and downstream cAMP and PKA signaling, ultimately attenuating lipid oxidation and adaptive thermogenesis. This chain is Potassium channel subfamily K member 3, found in Homo sapiens (Human).